We begin with the raw amino-acid sequence, 111 residues long: Prothymosin alpha (111 aa).

An N-acetylmethionine modification is found at Met1. Positions 1-111 are disordered; it reads MSDAAVDTSS…TKKQKTDEDD (111 aa). Ser2 is modified (N-acetylserine; in Prothymosin alpha, N-terminally processed). Phosphoserine is present on Ser2. Thr8 is modified (phosphothreonine). Phosphoserine occurs at positions 9 and 10. Phosphothreonine is present on residues Thr13 and Thr14. A compositionally biased stretch (basic and acidic residues) spans 13-31; that stretch reads TTKDLKEKKEVVEEAENGR. An N6-acetyllysine; alternate modification is found at Lys15. Lys15 is subject to N6-succinyllysine; alternate. Residues 40 to 84 are compositionally biased toward acidic residues; sequence ENEENGEQEADNEVDEEEEEGGEEEEEEEEGDGEEEDGDEDEEAE. Residues 101–111 show a composition bias toward basic and acidic residues; the sequence is DTKKQKTDEDD. The residue at position 102 (Thr102) is a Phosphothreonine. Lys103 is modified (N6-acetyllysine; alternate). Lys103 is covalently cross-linked (Glycyl lysine isopeptide (Lys-Gly) (interchain with G-Cter in SUMO2); alternate). Thr107 carries the post-translational modification Phosphothreonine.

This sequence belongs to the pro/parathymosin family. As to quaternary structure, interacts with NUPR1; regulates apoptotic process. In terms of processing, covalently linked to a small RNA of about 20 nucleotides.

It localises to the nucleus. In terms of biological role, prothymosin alpha may mediate immune function by conferring resistance to certain opportunistic infections. In Homo sapiens (Human), this protein is Prothymosin alpha (PTMA).